A 133-amino-acid chain; its full sequence is Large ribosomal subunit protein uL22 (133 aa).

Belongs to the universal ribosomal protein uL22 family. Part of the 50S ribosomal subunit.

Its function is as follows. This protein binds specifically to 23S rRNA; its binding is stimulated by other ribosomal proteins, e.g. L4, L17, and L20. It is important during the early stages of 50S assembly. It makes multiple contacts with different domains of the 23S rRNA in the assembled 50S subunit and ribosome. Functionally, the globular domain of the protein is located near the polypeptide exit tunnel on the outside of the subunit, while an extended beta-hairpin is found that lines the wall of the exit tunnel in the center of the 70S ribosome. The protein is Large ribosomal subunit protein uL22 of Nocardia farcinica (strain IFM 10152).